The chain runs to 121 residues: Large ribosomal subunit protein uL14 (121 aa).

The protein belongs to the universal ribosomal protein uL14 family. Part of the 50S ribosomal subunit. Forms a cluster with proteins L3 and L19. In the 70S ribosome, L14 and L19 interact and together make contacts with the 16S rRNA in bridges B5 and B8.

Functionally, binds to 23S rRNA. Forms part of two intersubunit bridges in the 70S ribosome. In Bacteroides fragilis (strain ATCC 25285 / DSM 2151 / CCUG 4856 / JCM 11019 / LMG 10263 / NCTC 9343 / Onslow / VPI 2553 / EN-2), this protein is Large ribosomal subunit protein uL14.